Here is a 742-residue protein sequence, read N- to C-terminus: Zinc transporter ZIP6 (742 aa).

Residues Met1–Trp353 lie on the Extracellular side of the membrane. N-linked (GlcNAc...) asparagine glycosylation is found at Asn94 and Asn127. 2 disordered regions span residues Pro148 to Asp182 and Met191 to Arg210. Residues Lys152–Pro165 show a composition bias toward basic and acidic residues. Residues Asn192–Thr206 are compositionally biased toward polar residues. N-linked (GlcNAc...) asparagine glycosylation is found at Asn212, Asn232, and Asn237. The segment at Thr220–Arg260 is disordered. The span at Asp222 to Ser236 shows a compositional bias: polar residues. Residues Thr239–Arg260 are compositionally biased toward basic and acidic residues. N-linked (GlcNAc...) asparagine glycans are attached at residues Asn267 and Asn337. The tract at residues Glu310–Arg342 is disordered. Basic residues predominate over residues His316 to Thr339. The chain crosses the membrane as a helical span at residues Leu354–Ile374. Residues Pro375–Leu385 lie on the Cytoplasmic side of the membrane. The helical transmembrane segment at Leu386–Ile406 threads the bilayer. Residues Pro407–Pro430 are Extracellular-facing. A helical transmembrane segment spans residues Val431–Leu451. Over Thr452–Ala644 the chain is Cytoplasmic. A helical membrane pass occupies residues Met645–Ile665. Residues Gly666–Asn671 lie on the Extracellular side of the membrane. Residues Val672 to Met692 traverse the membrane as a helical segment. The Cytoplasmic portion of the chain corresponds to Val693–Gly710. The chain crosses the membrane as a helical span at residues Phe711 to Val731. The Extracellular segment spans residues Phe732 to Tyr742.

Belongs to the ZIP transporter (TC 2.A.5) family. Post-translationally, cleaved on the N-terminus before locating to the plasma membrane. In terms of processing, N-glycosylated.

Its subcellular location is the cell membrane. It carries out the reaction Zn(2+)(in) = Zn(2+)(out). Acts as a zinc-influx transporter which plays a role in zinc homeostasis and in the induction of epithelial-to-mesenchymal transition (EMT). In Danio rerio (Zebrafish), this protein is Zinc transporter ZIP6.